We begin with the raw amino-acid sequence, 171 residues long: Peptide methionine sulfoxide reductase MsrA (171 aa).

Cys13 is a catalytic residue.

The protein belongs to the MsrA Met sulfoxide reductase family.

The catalysed reaction is L-methionyl-[protein] + [thioredoxin]-disulfide + H2O = L-methionyl-(S)-S-oxide-[protein] + [thioredoxin]-dithiol. It carries out the reaction [thioredoxin]-disulfide + L-methionine + H2O = L-methionine (S)-S-oxide + [thioredoxin]-dithiol. Its function is as follows. Has an important function as a repair enzyme for proteins that have been inactivated by oxidation. Catalyzes the reversible oxidation-reduction of methionine sulfoxide in proteins to methionine. In Mycobacterium sp. (strain JLS), this protein is Peptide methionine sulfoxide reductase MsrA.